Reading from the N-terminus, the 280-residue chain is MKIDSTTKVFGLIGHPVKHSLSPLIHNSSFEKLNFNGVYVVFDVAPELLENAVKGLKALGIKGFNVTVPHKESVMNYLDFVTEEAEKIGAVNTVVNENGILKGYNTDVQGFIDSLKELKEDVRGRKAFVLGAGGASKAICFALAREGVESIVIANRTLNKAKALAEYIREEFKMKCDYCSIEEVEKFNEIDILINTTSVGMHPEVGNSPVSEEVVAKANFVYDLIYNPSETLFLKYARKNGVKSANGLSMLVNQASYAFYLWTGEFFDKDFVYEKIRGEM.

Residues 20–22 (SLS) and threonine 67 each bind shikimate. The active-site Proton acceptor is the lysine 71. Glutamate 83 contacts NADP(+). Positions 92 and 107 each coordinate shikimate. NADP(+) is bound by residues 131–135 (GAGGA), 155–160 (NRTLNK), and leucine 224. Tyrosine 226 provides a ligand contact to shikimate. Glycine 247 contacts NADP(+).

The protein belongs to the shikimate dehydrogenase family. In terms of assembly, homodimer.

The enzyme catalyses shikimate + NADP(+) = 3-dehydroshikimate + NADPH + H(+). Its pathway is metabolic intermediate biosynthesis; chorismate biosynthesis; chorismate from D-erythrose 4-phosphate and phosphoenolpyruvate: step 4/7. Functionally, involved in the biosynthesis of the chorismate, which leads to the biosynthesis of aromatic amino acids. Catalyzes the reversible NADPH linked reduction of 3-dehydroshikimate (DHSA) to yield shikimate (SA). In Caldanaerobacter subterraneus subsp. tengcongensis (strain DSM 15242 / JCM 11007 / NBRC 100824 / MB4) (Thermoanaerobacter tengcongensis), this protein is Shikimate dehydrogenase (NADP(+)).